Reading from the N-terminus, the 1395-residue chain is MTGAEIESGAQVKPEKKPGEEVVGGAEIENDVPLVVRPKVRTQAQIMPGARPKNKSKVMPGASTKVETSAVGGARPKSKAKAIPVSRFKEEAQMWAQPRFGAERLSKTERNSQTNIIASPLVSTDSVLVAKTKYLSEDRELVNTDTESFPRRKAHYQAGFQPSFRSKEETNMGSWCCPRPTSKQEASPNSDFKWVDKSVSSLFWSGDEVTAKFHPGNRVKDSNRSMHMANQEANTMSRSQTNQELYIASSSGSEDESVKTPWFWARDKTNTWSGPREDPNSRSRFRSKKEVYVESSSGSEHEDHLESWFGAGKEAKFRSKMRAGKEANNRARHRAKREACIDFMPGSIDVIKKESCFWPEENANTFSRPMIKKEARARAMTKEEAKTKARARAKQEARSEEEALIGTWFWATDESSMADEASIESSLQVEDESIIGSWFWTEEEASMGTGASSKSRPRTDGERIGDSLFGAREKTSMKTGAEATSESILAADDEQVIIGSWFWAGEEVNQEAEEETIFGSWFWVIDAASVESGVGVSCESRTRSEEEEVIGPWFWSGEQVDIEAGIGEEARPGAEEETIFGSWFWAENQTYMDCRAETSCDTMQGAEEEEPIIGSWFWTRVEACVEGDVNSKSSLEDKEEAMIPCFGAKEEVSMKHGTGVRCRFMAGAEETNNKSCFWAEKEPCMYPAGGGSWKSRPEEEEDIVNSWFWSRKYTKPEAIIGSWLWATEESNIDGTGEKAKLLTEEETIINSWFWKEDEAISEATDREESRPEAEEGDIIGSWFWAGEEDRLEPAAETREEDRLAAEKEGIVGSWFGAREETIRREAGSCSKSSPKAEEEEVIIGSWFWEEEASPEAVAGVGFESKPGTEEEEITVGSWFWPEEEASIQAGSQAVEEMESETEEETIFGSWFWDGKEVSEEAGPCCVSKPEDDEEMIVESWFWSRDKAIKETGTVATCESKPENEEGAIVGSWFEAEDEVDNRTDNGSNCGSRTLADEDEAIVGSWFWAGDEAHFESNPSPVFRAICRSTCSVEQEPDPSRRPQSWEEVTVQFKPGPWGRVGFPSISPFRFPKEAASLFCEMFGGKPRNMVLSPEGEDQESLLQPDQPSPEFPFQYDPSYRSVQEIREHLRAKESTEPESSSCNCIQCELKIGSEEFEELLLLMEKIRDPFIHEISKIAMGMRSASQFTRDFIRDSGVVSLIETLLNYPSSRVRTSFLENMIRMAPPYPNLNIIQTYICKVCEETLAYSVDSPEQLSGIRMIRHLTTTTDYHTLVANYMSGFLSLLATGNAKTRFHVLKMLLNLSENLFMTKELLSAEAVSEFIGLFNREETNDNIQIVLAIFENIGNNIKKETVFSDDDFNIEPLISAFHKVEKFAKELQGKTDNQNDPEGDQEN.

Disordered stretches follow at residues 1–25 (MTGAEIESGAQVKPEKKPGEEVVGG), 45–83 (QIMPGARPKNKSKVMPGASTKVETSAVGGARPKSKAKAI), and 269–288 (TNTWSGPREDPNSRSRFRSK). Positions 269–281 (TNTWSGPREDPNS) are enriched in basic and acidic residues. Position 297 is a phosphoserine (S297). The interval 446–469 (SMGTGASSKSRPRTDGERIGDSLF) is disordered. Over residues 457–469 (PRTDGERIGDSLF) the composition is skewed to basic and acidic residues. Residues S631 and S899 each carry the phosphoserine modification. The segment at 899 to 1395 (SETEEETIFG…QNDPEGDQEN (497 aa)) is OPRD1-binding.

The protein belongs to the GPRASP family. Interacts with cytoplasmic tails of a variety of G-protein coupled receptors such as D2 dopamine receptor/DRD2, delta opioid receptor/OPRD1, beta-2 adrenergic receptor/ADRB2 and D4 dopamine receptor/DRD4. Interacts with PER1. Interacts with BECN2; the interaction is direct. As to expression, expressed in the brain, with lower expression in medulla, spinal cord and substantia nigra.

Its subcellular location is the cytoplasm. Functionally, modulates lysosomal sorting and functional down-regulation of a variety of G-protein coupled receptors. Targets receptors for degradation in lysosomes via its interaction with BECN2. This is G-protein coupled receptor-associated sorting protein 1 (GPRASP1) from Homo sapiens (Human).